Reading from the N-terminus, the 91-residue chain is UPF0250 protein PSPTO_4820 (91 aa).

This sequence belongs to the UPF0250 family.

The polypeptide is UPF0250 protein PSPTO_4820 (Pseudomonas syringae pv. tomato (strain ATCC BAA-871 / DC3000)).